The sequence spans 380 residues: D-alanine--D-alanine ligase (380 aa).

Positions lysine 142–glutamate 348 constitute an ATP-grasp domain. Residue glutamine 172 to valine 227 participates in ATP binding. Aspartate 302, glutamate 315, and asparagine 317 together coordinate Mg(2+).

The protein belongs to the D-alanine--D-alanine ligase family. Requires Mg(2+) as cofactor. The cofactor is Mn(2+).

Its subcellular location is the cytoplasm. It catalyses the reaction 2 D-alanine + ATP = D-alanyl-D-alanine + ADP + phosphate + H(+). The protein operates within cell wall biogenesis; peptidoglycan biosynthesis. In terms of biological role, cell wall formation. The chain is D-alanine--D-alanine ligase from Levilactobacillus brevis (strain ATCC 367 / BCRC 12310 / CIP 105137 / JCM 1170 / LMG 11437 / NCIMB 947 / NCTC 947) (Lactobacillus brevis).